A 432-amino-acid chain; its full sequence is Probable protein phosphatase 2C 75 (432 aa).

Positions 44-356 (VACLFTRQGK…DDCAVVCLFL (313 aa)) constitute a PPM-type phosphatase domain. Mn(2+) is bound by residues D80, G81, D301, and D347. The tract at residues 372–408 (SPRMPALSGITRPNSKRVTPDDVDDGSDSNVSGDERS) is disordered.

The protein belongs to the PP2C family. Mg(2+) is required as a cofactor. Mn(2+) serves as cofactor.

The enzyme catalyses O-phospho-L-seryl-[protein] + H2O = L-seryl-[protein] + phosphate. The catalysed reaction is O-phospho-L-threonyl-[protein] + H2O = L-threonyl-[protein] + phosphate. The polypeptide is Probable protein phosphatase 2C 75 (Oryza sativa subsp. japonica (Rice)).